Here is a 599-residue protein sequence, read N- to C-terminus: BICD family-like cargo adapter 1 (599 aa).

The tract at residues 1-27 (MELPISFLSDSSRPAASSERGDQAALG) is disordered. The CC1 box motif lies at 76–80 (AARLG). Positions 80–341 (GKALLERNQD…WEAHCQVRSL (262 aa)) form a coiled coil. Positions 352–375 (DSAVSTDSSMDESSETSSAKDVPA) are disordered. Positions 405–536 (EDDGLEEQIK…LEAWQDDMHR (132 aa)) form a coiled coil.

The protein belongs to the BICDR family. Part of a tripartite complex with dynein and dynactin, acts an adapter linking the dynein motor complex and dynactin. Interacts with KIF1C. Interacts with RAB6A and RAB6B; interaction is specific to Rab6.

The protein localises to the cytoplasm. The protein resides in the cytoskeleton. It is found in the microtubule organizing center. Its subcellular location is the centrosome. Functionally, acts as an adapter protein linking the dynein motor complex to various cargos and converts dynein from a non-processive to a highly processive motor in the presence of dynactin. Facilitates the interaction between dynein and dynactin and activates dynein processivity (the ability to move along a microtubule for a long distance without falling off the track). Predominantly recruits 2 dyneins, which increases both the force and speed of the microtubule motor. Component of secretory vesicle machinery in developing neurons that acts as a regulator of neurite outgrowth. Regulates the secretory vesicle transport by controlling the accumulation of Rab6-containing secretory vesicles in the pericentrosomal region restricting anterograde secretory transport during the early phase of neuronal differentiation, thereby inhibiting neuritogenesis. The polypeptide is BICD family-like cargo adapter 1 (bicdl1) (Xenopus tropicalis (Western clawed frog)).